A 290-amino-acid chain; its full sequence is Pyridoxal 5'-phosphate synthase subunit PdxS (290 aa).

Aspartate 22 contacts D-ribose 5-phosphate. The active-site Schiff-base intermediate with D-ribose 5-phosphate is lysine 79. Glycine 151 is a D-ribose 5-phosphate binding site. Position 163 (arginine 163) interacts with D-glyceraldehyde 3-phosphate. D-ribose 5-phosphate contacts are provided by residues glycine 212 and 233-234; that span reads GS.

Belongs to the PdxS/SNZ family. As to quaternary structure, in the presence of PdxT, forms a dodecamer of heterodimers.

It carries out the reaction aldehydo-D-ribose 5-phosphate + D-glyceraldehyde 3-phosphate + L-glutamine = pyridoxal 5'-phosphate + L-glutamate + phosphate + 3 H2O + H(+). The protein operates within cofactor biosynthesis; pyridoxal 5'-phosphate biosynthesis. Catalyzes the formation of pyridoxal 5'-phosphate from ribose 5-phosphate (RBP), glyceraldehyde 3-phosphate (G3P) and ammonia. The ammonia is provided by the PdxT subunit. Can also use ribulose 5-phosphate and dihydroxyacetone phosphate as substrates, resulting from enzyme-catalyzed isomerization of RBP and G3P, respectively. The chain is Pyridoxal 5'-phosphate synthase subunit PdxS from Clostridium botulinum (strain Loch Maree / Type A3).